Consider the following 255-residue polypeptide: Phosphatidylcholine synthase (255 aa).

Topologically, residues 1–13 (MNPIKPPFTLNQY) are cytoplasmic. A helical membrane pass occupies residues 14-34 (FAAWFVHVFTASAACIGVFSL). The Periplasmic portion of the chain corresponds to 35-42 (YKIYQHDY). A helical transmembrane segment spans residues 43–63 (VFALWLMAITVFIDAVDGSLA). Over 64–76 (RLVHVKSVLPKID) the chain is Cytoplasmic. The helical transmembrane segment at 77 to 97 (GALLDNIVDYLNYVITPCFFL) threads the bilayer. Residues 98–103 (LVKPGM) lie on the Periplasmic side of the membrane. A helical membrane pass occupies residues 104–124 (LPADYVVPITAAITITSAYQF). Residues 125-133 (CQDDAKTPD) lie on the Cytoplasmic side of the membrane. A helical membrane pass occupies residues 134–154 (HFFKGFPCYWNITVFYMYIFN). Position 155 (threonine 155) is a topological domain, periplasmic. Residues 156 to 175 (SMIVNTVLLSLFCVLIFIPV) form a helical membrane-spanning segment. The Cytoplasmic portion of the chain corresponds to 176 to 190 (KYVYPSRLDYLTESR). Residues 191-211 (VLKILMHCCSALYGISSFCLL) traverse the membrane as a helical segment. The Periplasmic portion of the chain corresponds to 212-217 (VNYPET). A helical membrane pass occupies residues 218 to 238 (NKLWVSLSLGYVGMYLFLSFY). Residues 239 to 255 (RTYYPMFKAKITANNKD) lie on the Cytoplasmic side of the membrane.

The protein belongs to the CDP-alcohol phosphatidyltransferase class-I family. It depends on Mn(2+) as a cofactor.

The protein localises to the cell inner membrane. The enzyme catalyses a CDP-1,2-diacyl-sn-glycerol + choline = a 1,2-diacyl-sn-glycero-3-phosphocholine + CMP + H(+). Functionally, condenses choline with CDP-diglyceride to produce phosphatidylcholine and CMP. Affects virulence of this bacterium when there is a complete loss of phosphatidylcholine formation due to absence of both the synthase (pcs) and the methylation (pmtA) pathways. Reduced virulence results from lowered yields of bacteria within host macrophages and because of loss of high multiplicity cytotoxicity. The chain is Phosphatidylcholine synthase from Legionella pneumophila subsp. pneumophila (strain Philadelphia 1 / ATCC 33152 / DSM 7513).